Consider the following 369-residue polypeptide: Phosphoribosyl pyrophosphate synthase-associated protein 2 (369 aa).

An N-acetylmethionine modification is found at M1. Phosphoserine occurs at positions 219, 227, and 233.

This sequence belongs to the ribose-phosphate pyrophosphokinase family. Binds to PRPS1 and PRPS2. Ubiquitous.

In terms of biological role, seems to play a negative regulatory role in 5-phosphoribose 1-diphosphate synthesis. In Rattus norvegicus (Rat), this protein is Phosphoribosyl pyrophosphate synthase-associated protein 2 (Prpsap2).